The sequence spans 219 residues: Adenylate kinase (219 aa).

Residue 10 to 15 (GAGKGT) coordinates ATP. Residues 30–59 (ATGDLFRANISQGTDLGKQARAYMDAGQLV) are NMP. Residues Thr-31, Arg-36, 57–59 (QLV), 85–88 (GFPR), and Gln-92 each bind AMP. The interval 126–164 (GRRVCRNNSAHVFHLTYNPPKAEGVCDACGGELYQRDDD) is LID. ATP-binding positions include Arg-127 and 137–138 (VF). Arg-161 and Arg-172 together coordinate AMP. Gly-200 provides a ligand contact to ATP.

It belongs to the adenylate kinase family. Monomer.

Its subcellular location is the cytoplasm. The catalysed reaction is AMP + ATP = 2 ADP. Its pathway is purine metabolism; AMP biosynthesis via salvage pathway; AMP from ADP: step 1/1. Its function is as follows. Catalyzes the reversible transfer of the terminal phosphate group between ATP and AMP. Plays an important role in cellular energy homeostasis and in adenine nucleotide metabolism. The chain is Adenylate kinase from Streptomyces griseus subsp. griseus (strain JCM 4626 / CBS 651.72 / NBRC 13350 / KCC S-0626 / ISP 5235).